A 152-amino-acid chain; its full sequence is Toxin coregulated pilus biosynthesis protein S (152 aa).

Positions 1-20 (MNIKLSFISIAFLSLSFNVA) are cleaved as a signal peptide.

It is found in the periplasm. The protein localises to the secreted. Functionally, the toxin coregulated pilus (TCP) is essential for successful colonization of the small intestine. The chain is Toxin coregulated pilus biosynthesis protein S (tcpS) from Vibrio cholerae serotype O1 (strain ATCC 39315 / El Tor Inaba N16961).